We begin with the raw amino-acid sequence, 358 residues long: DnaJ homolog subfamily C member 18 (358 aa).

Residues 82-146 (NYYEILGVSR…DKRLRYDEYG (65 aa)) form the J domain. A helical membrane pass occupies residues 228 to 248 (AFIQLLPVLVIVIISVITQLL).

The protein resides in the endoplasmic reticulum membrane. The sequence is that of DnaJ homolog subfamily C member 18 (DNAJC18) from Bos taurus (Bovine).